Reading from the N-terminus, the 493-residue chain is Glutamate--tRNA ligase (493 aa).

Positions 10–20 (PSPTGDPHVGT) match the 'HIGH' region motif. Residues 251 to 255 (KLSKR) carry the 'KMSKS' region motif. K254 is a binding site for ATP.

It belongs to the class-I aminoacyl-tRNA synthetase family. Glutamate--tRNA ligase type 1 subfamily. As to quaternary structure, monomer.

The protein localises to the cytoplasm. The enzyme catalyses tRNA(Glu) + L-glutamate + ATP = L-glutamyl-tRNA(Glu) + AMP + diphosphate. Catalyzes the attachment of glutamate to tRNA(Glu) in a two-step reaction: glutamate is first activated by ATP to form Glu-AMP and then transferred to the acceptor end of tRNA(Glu). This chain is Glutamate--tRNA ligase, found in Pseudomonas putida (strain ATCC 47054 / DSM 6125 / CFBP 8728 / NCIMB 11950 / KT2440).